Reading from the N-terminus, the 315-residue chain is Acetyl-coenzyme A carboxylase carboxyl transferase subunit alpha (315 aa).

The CoA carboxyltransferase C-terminal domain maps to 35 to 289; sequence KLSKKRFELM…RKAVAAELKI (255 aa).

This sequence belongs to the AccA family. In terms of assembly, acetyl-CoA carboxylase is a heterohexamer composed of biotin carboxyl carrier protein (AccB), biotin carboxylase (AccC) and two subunits each of ACCase subunit alpha (AccA) and ACCase subunit beta (AccD).

It is found in the cytoplasm. It catalyses the reaction N(6)-carboxybiotinyl-L-lysyl-[protein] + acetyl-CoA = N(6)-biotinyl-L-lysyl-[protein] + malonyl-CoA. It participates in lipid metabolism; malonyl-CoA biosynthesis; malonyl-CoA from acetyl-CoA: step 1/1. Its function is as follows. Component of the acetyl coenzyme A carboxylase (ACC) complex. First, biotin carboxylase catalyzes the carboxylation of biotin on its carrier protein (BCCP) and then the CO(2) group is transferred by the carboxyltransferase to acetyl-CoA to form malonyl-CoA. The protein is Acetyl-coenzyme A carboxylase carboxyl transferase subunit alpha of Francisella tularensis subsp. mediasiatica (strain FSC147).